The sequence spans 349 residues: Probable ethanolamine kinase (349 aa).

It belongs to the choline/ethanolamine kinase family.

It is found in the cytoplasm. The enzyme catalyses ethanolamine + ATP = phosphoethanolamine + ADP + H(+). Its pathway is phospholipid metabolism; phosphatidylethanolamine biosynthesis; phosphatidylethanolamine from ethanolamine: step 1/3. Functionally, highly specific for ethanolamine phosphorylation. May be a rate-controlling step in phosphatidylethanolamine biosynthesis. This Nematostella vectensis (Starlet sea anemone) protein is Probable ethanolamine kinase (etnk).